The following is a 335-amino-acid chain: DNA-directed RNA polymerase subunit alpha (335 aa).

An alpha N-terminal domain (alpha-NTD) region spans residues 1–248 (MTIQTSRTLS…GLFAPLQEVS (248 aa)). An alpha C-terminal domain (alpha-CTD) region spans residues 256-335 (KPDEDNQKNQ…LPRTREKGKA (80 aa)).

The protein belongs to the RNA polymerase alpha chain family. As to quaternary structure, in cyanobacteria the RNAP catalytic core is composed of 2 alpha, 1 beta, 1 beta', 1 gamma and 1 omega subunit. When a sigma factor is associated with the core the holoenzyme is formed, which can initiate transcription.

The enzyme catalyses RNA(n) + a ribonucleoside 5'-triphosphate = RNA(n+1) + diphosphate. Functionally, DNA-dependent RNA polymerase catalyzes the transcription of DNA into RNA using the four ribonucleoside triphosphates as substrates. The protein is DNA-directed RNA polymerase subunit alpha of Synechococcus sp. (strain JA-2-3B'a(2-13)) (Cyanobacteria bacterium Yellowstone B-Prime).